Here is a 402-residue protein sequence, read N- to C-terminus: Diaminopimelate decarboxylase (402 aa).

Residue Lys61 is modified to N6-(pyridoxal phosphate)lysine. Residues Gly233 and 269–272 (EPGR) each bind pyridoxal 5'-phosphate. Positions 272, 304, 308, 334, and 360 each coordinate substrate. Tyr360 contributes to the pyridoxal 5'-phosphate binding site.

It belongs to the Orn/Lys/Arg decarboxylase class-II family. LysA subfamily. As to quaternary structure, homodimer. Pyridoxal 5'-phosphate is required as a cofactor.

It catalyses the reaction meso-2,6-diaminopimelate + H(+) = L-lysine + CO2. The protein operates within amino-acid biosynthesis; L-lysine biosynthesis via DAP pathway; L-lysine from DL-2,6-diaminopimelate: step 1/1. Functionally, specifically catalyzes the decarboxylation of meso-diaminopimelate (meso-DAP) to L-lysine. The protein is Diaminopimelate decarboxylase of Thermoplasma acidophilum (strain ATCC 25905 / DSM 1728 / JCM 9062 / NBRC 15155 / AMRC-C165).